The sequence spans 307 residues: Myeloid-associated differentiation marker-like protein 2 (307 aa).

MARVEL domains lie at alanine 17–glycine 154 and tyrosine 159–phenylalanine 303. The next 7 membrane-spanning stretches (helical) occupy residues phenylalanine 53–phenylalanine 73, alanine 90–phenylalanine 110, leucine 129–threonine 149, valine 163–valine 183, valine 198–glycine 218, valine 232–phenylalanine 252, and leucine 278–serine 298.

The protein belongs to the MAL family.

Its subcellular location is the membrane. The chain is Myeloid-associated differentiation marker-like protein 2 (Myadml2) from Rattus norvegicus (Rat).